The following is a 373-amino-acid chain: Probable jasmonic acid carboxyl methyltransferase 1 (373 aa).

An S-adenosyl-L-homocysteine-binding site is contributed by Tyr-18. Gln-25 contributes to the jasmonate binding site. Residues Cys-59, Asn-64, Asp-96, Leu-97, Ser-135, and Phe-136 each contribute to the S-adenosyl-L-homocysteine site. 2 residues coordinate jasmonate: His-156 and Trp-157. The Mg(2+) site is built by Asn-174, Asp-260, Phe-262, and Asn-263.

Belongs to the methyltransferase superfamily. Type-7 methyltransferase family. It depends on Mg(2+) as a cofactor.

The protein resides in the cytoplasm. It is found in the nucleus. The catalysed reaction is jasmonate + S-adenosyl-L-methionine = methyl (-)-jasmonate + S-adenosyl-L-homocysteine. The protein operates within lipid metabolism; oxylipin biosynthesis. Its function is as follows. Catalyzes the methylation of jasmonate into methyljasmonate, a plant volatile that acts as an important cellular regulator mediating diverse developmental processes and defense responses. This Theobroma cacao (Cacao) protein is Probable jasmonic acid carboxyl methyltransferase 1.